The following is a 256-amino-acid chain: Nuclear shuttle protein (256 aa).

Positions 21 to 42 (HSTGKRSRNVSRIDFKRRSSKY) match the Bipartite nuclear localization signal motif. Positions 81–96 (SLGKTEPSRSRSYIKL) match the Nuclear localization signal motif. An interaction with Arabidopsis thaliana NSI protein region spans residues 150 to 187 (ELFGARIHSHGNLAVSSALKDRFYIRHVFKRVISVEKD).

The protein belongs to the begomovirus nuclear shuttle protein family. In terms of assembly, binds to single-stranded and double-stranded viral DNA. Interacts with the host nuclear shuttle interacting (NSI) protein. This interaction may allow NSP to recruit NSI monomers to the viral genome and thus regulate nuclear export of viral genome by NSP.

The protein localises to the host nucleus. The protein resides in the host cytoplasm. It is found in the host cell membrane. Its function is as follows. Binds to the genomic viral ssDNA, shuttles it into and out of the cell nucleus. Begomoviruses use 2 proteins to transport their DNA from cell to cell. The nuclear shuttle protein (NSP) shuttles it between nucleus and cytoplasm and the movement protein (MP) probably transports the DNA-NSP complex to the cell periphery and facilitates movement across the cell wall. The sequence is that of Nuclear shuttle protein from Solanum lycopersicum (Tomato).